The chain runs to 118 residues: Large ribosomal subunit protein bL20 (118 aa).

This sequence belongs to the bacterial ribosomal protein bL20 family.

Functionally, binds directly to 23S ribosomal RNA and is necessary for the in vitro assembly process of the 50S ribosomal subunit. It is not involved in the protein synthesizing functions of that subunit. This is Large ribosomal subunit protein bL20 from Pseudomonas entomophila (strain L48).